Here is a 289-residue protein sequence, read N- to C-terminus: Ribonuclease H2 subunit A (289 aa).

Residues Pro-20–Phe-249 form the RNase H type-2 domain. A divalent metal cation contacts are provided by Asp-26, Glu-27, and Asp-134.

This sequence belongs to the RNase HII family. Eukaryotic subfamily. Mn(2+) is required as a cofactor. It depends on Mg(2+) as a cofactor.

The catalysed reaction is Endonucleolytic cleavage to 5'-phosphomonoester.. Functionally, endonuclease that specifically degrades the RNA of RNA-DNA hybrids. Participates in DNA replication. The sequence is that of Ribonuclease H2 subunit A (rnaseh2A) from Dictyostelium discoideum (Social amoeba).